The primary structure comprises 200 residues: Adenylyl-sulfate kinase (200 aa).

35 to 42 serves as a coordination point for ATP; that stretch reads GLPASGKS. Catalysis depends on S109, which acts as the Phosphoserine intermediate.

Belongs to the APS kinase family.

The catalysed reaction is adenosine 5'-phosphosulfate + ATP = 3'-phosphoadenylyl sulfate + ADP + H(+). Its pathway is sulfur metabolism; hydrogen sulfide biosynthesis; sulfite from sulfate: step 2/3. Its function is as follows. Catalyzes the synthesis of activated sulfate. This Thermodesulfovibrio yellowstonii (strain ATCC 51303 / DSM 11347 / YP87) protein is Adenylyl-sulfate kinase.